Reading from the N-terminus, the 831-residue chain is Intraflagellar transport protein 88 (831 aa).

11 TPR repeats span residues 68–101, 120–153, 156–189, 248–281, 492–525, 526–559, 560–593, 595–627, 632–665, 666–699, and 700–733; these read IFKL…EQKV, TCIW…AEGA, AQIR…ASPS, FDPL…SILI, RGVH…DPYD, SFAH…NMES, VQAT…LPSY, DAIY…FSAV, PSIY…VPFS, LAVI…DTTT, and PKWS…FPTN. A disordered region spans residues 785-816; sequence RRNSVAAVGPGSRAGQDRFEASNNRVSSNTGD. The segment covering 805 to 815 has biased composition (polar residues); the sequence is ASNNRVSSNTG.

It localises to the cell projection. Its subcellular location is the cilium. The protein resides in the flagellum. The protein localises to the cytoplasm. It is found in the cytoskeleton. It localises to the flagellum axoneme. Its subcellular location is the flagellum basal body. In terms of biological role, component of the intraflagellar transport complex B (IFT-B) involved in flagellar assembly. This is Intraflagellar transport protein 88 from Giardia intestinalis (strain ATCC 50803 / WB clone C6) (Giardia lamblia).